A 184-amino-acid polypeptide reads, in one-letter code: Large ribosomal subunit protein uL5c (184 aa).

It belongs to the universal ribosomal protein uL5 family. As to quaternary structure, part of the 50S ribosomal subunit; contacts the 5S rRNA.

The protein resides in the plastid. It localises to the chloroplast. Functionally, binds 5S rRNA, forms part of the central protuberance of the 50S subunit. This is Large ribosomal subunit protein uL5c (rpl5) from Mesostigma viride (Green alga).